The sequence spans 91 residues: DNA-binding protein HRL18 (91 aa).

The protein belongs to the bacterial histone-like protein family.

Its function is as follows. Histone-like DNA-binding protein which is capable of wrapping DNA to stabilize it, and thus to prevent its denaturation under extreme environmental conditions. The sequence is that of DNA-binding protein HRL18 from Rhizobium leguminosarum.